Reading from the N-terminus, the 634-residue chain is MSDSFYRYDVIVIGGGHAGTEAALASARAGAHTLLLTHTIETVGAMSCNPAIGGIGKGHLVKEIDALGGAMAHAADLAGIQWRTLNASKGPAVRATRCQADRNLYRTAIRCIVQAQPKLTVFQAAVDDLIIHNGTCEADSVRGVITQTGLRFEAPSVVLTAGTFLAGKIHVGDTQYAAGRLGDPPATTLAARLRERPFAIDRLKTGTPPRIDGRTLDYGVMGEQPGDDPLPVMSFMGQVSDHPRQVSCWITQTTEQTHDIIRNALHRSPLYSGQIEGIGPRYCPSIEDKVVRFAEKTSHQIFVEPEGLDVAEIYPNGISTSLPFDVQLALVRSIHGFAQAHITRPGYAIEYDFFDPRGLKASLETKAVGGLFFAGQINGTTGYEEAAAQGLLAGLNAARHVHGLPAWSPRRDEAYLGVLVDDLITHGTTEPYRMFTSRAEYRLQLREDNADARLTGAGREMGLVDDARWARFSAKQEAVQRETARLSALWATPGNALGREVADALGVTVSRETNVLDLIKRPELNYATLMRVPTLGPGVDDAQVAEQVEISVKYTGYLDRQRDDIARQQRHETTPIPEGFDYAGVRGLSIEVQQKLEHVRPQHIGQAQRIPGMTPAAISLLLVHLERARRHRVA.

Residue 14–19 (GGGHAG) participates in FAD binding. 279–293 (GPRYCPSIEDKVVRF) contacts NAD(+).

Belongs to the MnmG family. As to quaternary structure, homodimer. Heterotetramer of two MnmE and two MnmG subunits. The cofactor is FAD.

It is found in the cytoplasm. NAD-binding protein involved in the addition of a carboxymethylaminomethyl (cmnm) group at the wobble position (U34) of certain tRNAs, forming tRNA-cmnm(5)s(2)U34. This is tRNA uridine 5-carboxymethylaminomethyl modification enzyme MnmG from Xanthomonas oryzae pv. oryzae (strain KACC10331 / KXO85).